A 170-amino-acid chain; its full sequence is MADLIMGIDPGTLVCGYAFIRVENRYQIQPHSFGKIKLSQKQALSHRYRQLFTEISTILQREAPKAVVLETQYVHKNPQSTIKLGMARGVLLLAASLQDISVFEYAPNTAKKAAVGKGNASKQQVQLMVSKLLNIQDLLADDNEDIADAFALAMCHAHLAPYQDLKKSLL.

Catalysis depends on residues aspartate 9, glutamate 70, and aspartate 145. Mg(2+) is bound by residues aspartate 9, glutamate 70, and aspartate 145.

Belongs to the RuvC family. Homodimer which binds Holliday junction (HJ) DNA. The HJ becomes 2-fold symmetrical on binding to RuvC with unstacked arms; it has a different conformation from HJ DNA in complex with RuvA. In the full resolvosome a probable DNA-RuvA(4)-RuvB(12)-RuvC(2) complex forms which resolves the HJ. Mg(2+) is required as a cofactor.

It localises to the cytoplasm. The catalysed reaction is Endonucleolytic cleavage at a junction such as a reciprocal single-stranded crossover between two homologous DNA duplexes (Holliday junction).. Functionally, the RuvA-RuvB-RuvC complex processes Holliday junction (HJ) DNA during genetic recombination and DNA repair. Endonuclease that resolves HJ intermediates. Cleaves cruciform DNA by making single-stranded nicks across the HJ at symmetrical positions within the homologous arms, yielding a 5'-phosphate and a 3'-hydroxyl group; requires a central core of homology in the junction. The consensus cleavage sequence is 5'-(A/T)TT(C/G)-3'. Cleavage occurs on the 3'-side of the TT dinucleotide at the point of strand exchange. HJ branch migration catalyzed by RuvA-RuvB allows RuvC to scan DNA until it finds its consensus sequence, where it cleaves and resolves the cruciform DNA. In Chlamydia muridarum (strain MoPn / Nigg), this protein is Crossover junction endodeoxyribonuclease RuvC.